The following is a 371-amino-acid chain: Epoxyqueuosine reductase (371 aa).

Asp137 acts as the Proton donor in catalysis. One can recognise a 4Fe-4S ferredoxin-type domain in the interval 179-211; sequence IPLPVDTPVENQCGKCTACISSCPTNAILENGV. Residues Cys191, Cys194, Cys197, Cys201, Cys217, Cys244, Cys247, and Cys251 each contribute to the [4Fe-4S] cluster site.

The protein belongs to the QueG family. Monomer. The cofactor is cob(II)alamin. It depends on [4Fe-4S] cluster as a cofactor.

The protein resides in the cytoplasm. The enzyme catalyses epoxyqueuosine(34) in tRNA + AH2 = queuosine(34) in tRNA + A + H2O. The protein operates within tRNA modification; tRNA-queuosine biosynthesis. Its function is as follows. Catalyzes the conversion of epoxyqueuosine (oQ) to queuosine (Q), which is a hypermodified base found in the wobble positions of tRNA(Asp), tRNA(Asn), tRNA(His) and tRNA(Tyr). This Aliivibrio fischeri (strain ATCC 700601 / ES114) (Vibrio fischeri) protein is Epoxyqueuosine reductase.